The chain runs to 642 residues: Cylicin-1 (642 aa).

Disordered regions lie at residues 167–203 (NGEP…NLEY) and 284–607 (NCSQ…CEPF). Polar residues predominate over residues 191–203 (KTSNSTSETNLEY). 8 consecutive repeat copies span residues 294-313 (LKTG…GSKD), 314-344 (AKKE…DSKD), 345-391 (GKKK…KKST), 392-432 (GSTG…SSKK), 433-464 (SKKD…SEGD), 465-500 (STGK…SDLG), 501-526 (VNKK…SKAG), and 527-543 (RRKN…DSSG). The segment covering 298-316 (GKKERDSDIDSGGSKDAKK) has biased composition (basic and acidic residues). Residues 317 to 330 (EGKKKGKRESRKKR) are compositionally biased toward basic residues. A compositionally biased stretch (basic and acidic residues) spans 353–364 (KKNEIKKKKDTD). The segment covering 388–404 (KKSTGSTGSESVDSKST) has biased composition (low complexity). Residues 405-416 (NKVKKQVKKGVM) show a composition bias toward basic residues. The segment covering 428–440 (ASSKKSKKDEKKE) has biased composition (basic and acidic residues). Residues 454-463 (STDADSESEG) are compositionally biased toward acidic residues. A compositionally biased stretch (basic and acidic residues) spans 465 to 488 (STGKKNEKKDKKITKKGEKKDAKK). The segment covering 513 to 523 (SFSDSTSDSYS) has biased composition (low complexity). The 8 X approximate tandem repeats stretch occupies residues 527–543 (RRKNVRRSDSESEDSSG).

In terms of assembly, interacts with proteins of spermatozoa head including ACTL7A, CCIN, FAM209 and SPACA1; the interactions may be necessary for proper acrosome attachment to the nuclear envelope. In terms of tissue distribution, testis.

The protein resides in the cytoplasm. Its subcellular location is the cytoskeleton. The protein localises to the perinuclear theca. It is found in the calyx. Plays a role in the establishment of normal sperm morphology during spermatogenesis and is required for acrosome attachment to the nuclear envelope. The protein is Cylicin-1 of Mus musculus (Mouse).